Reading from the N-terminus, the 356-residue chain is Isocitrate dehydrogenase [NAD] subunit 1, mitochondrial (356 aa).

Positions 106, 137, and 224 each coordinate substrate. Asp224 is a Mg(2+) binding site.

The protein belongs to the isocitrate and isopropylmalate dehydrogenases family. As to quaternary structure, octamer of two non-identical subunits IDH1 and IDH2. Mg(2+) is required as a cofactor. It depends on Mn(2+) as a cofactor.

It is found in the mitochondrion. It catalyses the reaction D-threo-isocitrate + NAD(+) = 2-oxoglutarate + CO2 + NADH. Performs an essential role in the oxidative function of the citric acid cycle. Also binds RNA; specifically to the 5'-untranslated leaders of mitochondrial mRNAs. The sequence is that of Isocitrate dehydrogenase [NAD] subunit 1, mitochondrial (idh1) from Schizosaccharomyces pombe (strain 972 / ATCC 24843) (Fission yeast).